Here is a 306-residue protein sequence, read N- to C-terminus: Ribosomal protein L11 methyltransferase (306 aa).

S-adenosyl-L-methionine contacts are provided by threonine 152, glycine 179, aspartate 201, and asparagine 243.

It belongs to the methyltransferase superfamily. PrmA family.

It localises to the cytoplasm. It carries out the reaction L-lysyl-[protein] + 3 S-adenosyl-L-methionine = N(6),N(6),N(6)-trimethyl-L-lysyl-[protein] + 3 S-adenosyl-L-homocysteine + 3 H(+). In terms of biological role, methylates ribosomal protein L11. The chain is Ribosomal protein L11 methyltransferase from Citrifermentans bemidjiense (strain ATCC BAA-1014 / DSM 16622 / JCM 12645 / Bem) (Geobacter bemidjiensis).